Here is a 190-residue protein sequence, read N- to C-terminus: Thioredoxin F-type, chloroplastic (190 aa).

The interval 1–31 (MALHLSLSHQSWTSPAHPITSSDPTRSSVPG) is disordered. The N-terminal 77 residues, 1-77 (MALHLSLSHQ…SMEQALGTQE (77 aa)), are a transit peptide targeting the chloroplast. The span at 7–30 (LSHQSWTSPAHPITSSDPTRSSVP) shows a compositional bias: polar residues. One can recognise a Thioredoxin domain in the interval 78–189 (MEAIVGKVTE…LLEAIQAARS (112 aa)). Active-site nucleophile residues include Cys-114 and Cys-117. A disulfide bridge connects residues Cys-114 and Cys-117.

Belongs to the thioredoxin family. Plant F-type subfamily. Forms a complex with heterodimeric ferredoxin-thioredoxin reductase (FTR) and ferredoxin.

The protein localises to the plastid. The protein resides in the chloroplast. Participates in various redox reactions through the reversible oxidation of the active center dithiol to a disulfide. The F form is known to activate a number of enzymes of the photosynthetic carbon cycle. The protein is Thioredoxin F-type, chloroplastic of Spinacia oleracea (Spinach).